We begin with the raw amino-acid sequence, 193 residues long: Auxin-induced protein 22D (193 aa).

The interval 16–68 is disordered; it reads ATELRLGLPGSDEPEKRATARSNKRSSPEASDEESISNGSDVTKEDNVVPPAK. The short motif at 19–23 is the EAR-like (transcriptional repression) element; that stretch reads LRLGL. The 88-residue stretch at 97 to 184 folds into the PB1 domain; that stretch reads GMYVKVSMAG…SCKRLRIMKG (88 aa).

It belongs to the Aux/IAA family. In terms of assembly, homodimers and heterodimers.

The protein resides in the nucleus. In terms of biological role, aux/IAA proteins are short-lived transcriptional factors that function as repressors of early auxin response genes at low auxin concentrations. Repression is thought to result from the interaction with auxin response factors (ARFs), proteins that bind to the auxin-responsive promoter element (AuxRE). Formation of heterodimers with ARF proteins may alter their ability to modulate early auxin response genes expression. The sequence is that of Auxin-induced protein 22D (AUX22D) from Vigna radiata var. radiata (Mung bean).